Reading from the N-terminus, the 153-residue chain is uncharacterized protein (153 aa).

The next 2 helical transmembrane spans lie at 16–36 and 97–117; these read ILACLLLIFLMATIFLLILEI and ALTTTLSIILLVCIIMACIIC.

It is found in the membrane. This is an uncharacterized protein from Human herpesvirus 6A (strain Uganda-1102) (HHV-6 variant A).